A 565-amino-acid polypeptide reads, in one-letter code: Proline--tRNA ligase (565 aa).

Belongs to the class-II aminoacyl-tRNA synthetase family. ProS type 1 subfamily. Homodimer.

Its subcellular location is the cytoplasm. It carries out the reaction tRNA(Pro) + L-proline + ATP = L-prolyl-tRNA(Pro) + AMP + diphosphate. Its function is as follows. Catalyzes the attachment of proline to tRNA(Pro) in a two-step reaction: proline is first activated by ATP to form Pro-AMP and then transferred to the acceptor end of tRNA(Pro). As ProRS can inadvertently accommodate and process non-cognate amino acids such as alanine and cysteine, to avoid such errors it has two additional distinct editing activities against alanine. One activity is designated as 'pretransfer' editing and involves the tRNA(Pro)-independent hydrolysis of activated Ala-AMP. The other activity is designated 'posttransfer' editing and involves deacylation of mischarged Ala-tRNA(Pro). The misacylated Cys-tRNA(Pro) is not edited by ProRS. The chain is Proline--tRNA ligase from Francisella philomiragia subsp. philomiragia (strain ATCC 25017 / CCUG 19701 / FSC 153 / O#319-036).